The chain runs to 481 residues: Glutamate--tRNA ligase (481 aa).

The 'HIGH' region motif lies at 11–21 (PSPTGLLHIGN). Residues 255 to 259 (KLSKR) carry the 'KMSKS' region motif. Lysine 258 is a binding site for ATP.

This sequence belongs to the class-I aminoacyl-tRNA synthetase family. Glutamate--tRNA ligase type 1 subfamily. Monomer.

It is found in the cytoplasm. The catalysed reaction is tRNA(Glu) + L-glutamate + ATP = L-glutamyl-tRNA(Glu) + AMP + diphosphate. Catalyzes the attachment of glutamate to tRNA(Glu) in a two-step reaction: glutamate is first activated by ATP to form Glu-AMP and then transferred to the acceptor end of tRNA(Glu). In Streptococcus pyogenes serotype M4 (strain MGAS10750), this protein is Glutamate--tRNA ligase.